The sequence spans 728 residues: Catalase-peroxidase 1 (728 aa).

Residues 91 to 218 constitute a cross-link (tryptophyl-tyrosyl-methioninium (Trp-Tyr) (with M-244)); the sequence is WHSAGTYRTA…LAAVQMGLIY (128 aa). The active-site Proton acceptor is the His92. A cross-link (tryptophyl-tyrosyl-methioninium (Tyr-Met) (with W-91)) is located at residues 218–244; it reads YVNPEGPDGNPDPVAAAHDIRETFARM. His259 contacts heme b.

Belongs to the peroxidase family. Peroxidase/catalase subfamily. Homodimer or homotetramer. It depends on heme b as a cofactor. Post-translationally, formation of the three residue Trp-Tyr-Met cross-link is important for the catalase, but not the peroxidase activity of the enzyme.

The enzyme catalyses H2O2 + AH2 = A + 2 H2O. It catalyses the reaction 2 H2O2 = O2 + 2 H2O. In terms of biological role, bifunctional enzyme with both catalase and broad-spectrum peroxidase activity. The sequence is that of Catalase-peroxidase 1 from Burkholderia cenocepacia (strain ATCC BAA-245 / DSM 16553 / LMG 16656 / NCTC 13227 / J2315 / CF5610) (Burkholderia cepacia (strain J2315)).